The primary structure comprises 61 residues: Large ribosomal subunit protein uL30 (61 aa).

It belongs to the universal ribosomal protein uL30 family. In terms of assembly, part of the 50S ribosomal subunit.

This is Large ribosomal subunit protein uL30 from Nitrosomonas eutropha (strain DSM 101675 / C91 / Nm57).